The sequence spans 183 residues: MKIYVIYNYGQYNHLIHRTLRDLGVETKLVENTTPVEQLKDVDGLVIGGGPSLDRTGNCELYLKELDVPMIGICLGHQLMAKVFGGEVGKGSMGGYSEVKVRIVEDDELFEGIPREITVWASHMDEVKKLPEGFKRLAESDICKIEAMRHEKKPLYGVQWHPEVYHSQFGVELYRNFIEICKK.

Residues K2–K183 enclose the Glutamine amidotransferase type-1 domain. Catalysis depends on C74, which acts as the Nucleophile. Residues H161 and E163 contribute to the active site.

As to quaternary structure, heterodimer composed of a glutamine amidotransferase subunit (A) and a GMP-binding subunit (B).

The enzyme catalyses XMP + L-glutamine + ATP + H2O = GMP + L-glutamate + AMP + diphosphate + 2 H(+). It functions in the pathway purine metabolism; GMP biosynthesis; GMP from XMP (L-Gln route): step 1/1. Catalyzes the synthesis of GMP from XMP. The chain is GMP synthase [glutamine-hydrolyzing] subunit A from Archaeoglobus fulgidus (strain ATCC 49558 / DSM 4304 / JCM 9628 / NBRC 100126 / VC-16).